We begin with the raw amino-acid sequence, 93 residues long: U12-lycotoxin-Ls1e (93 aa).

The first 18 residues, 1–18 (MKFAVILLFTLVVLAVAS), serve as a signal peptide directing secretion. Positions 19 to 38 (ESVEEDTREIDVEEFQEQQR) are excised as a propeptide.

Belongs to the neurotoxin 31 family. Contains 5 disulfide bonds. As to expression, expressed by the venom gland.

Its subcellular location is the secreted. The chain is U12-lycotoxin-Ls1e from Lycosa singoriensis (Wolf spider).